The chain runs to 144 residues: uncharacterized protein (144 aa).

It belongs to the mimivirus L885/R898 family.

This is an uncharacterized protein from Acanthamoeba polyphaga (Amoeba).